Reading from the N-terminus, the 85-residue chain is Large ribosomal subunit protein bL27 (85 aa).

The interval 1–22 is disordered; it reads MAHKKAGGSTRNGRDSEAKRMG.

The protein belongs to the bacterial ribosomal protein bL27 family.

This is Large ribosomal subunit protein bL27 from Escherichia coli O6:K15:H31 (strain 536 / UPEC).